Consider the following 806-residue polypeptide: Leucine--tRNA ligase (806 aa).

Positions 38–48 match the 'HIGH' region motif; sequence PYPSGEIHMGH. A 'KMSKS' region motif is present at residues 572–576; sequence KMSKS. An ATP-binding site is contributed by K575.

This sequence belongs to the class-I aminoacyl-tRNA synthetase family.

The protein resides in the cytoplasm. The enzyme catalyses tRNA(Leu) + L-leucine + ATP = L-leucyl-tRNA(Leu) + AMP + diphosphate. The sequence is that of Leucine--tRNA ligase from Helicobacter acinonychis (strain Sheeba).